We begin with the raw amino-acid sequence, 304 residues long: tRNA dimethylallyltransferase (304 aa).

Position 10–17 (10–17 (GPTASGKT)) interacts with ATP. 12–17 (TASGKT) is a substrate binding site. 3 interaction with substrate tRNA regions span residues 35-38 (DSAL), 159-163 (QRLSR), and 240-245 (RCVGYR).

The protein belongs to the IPP transferase family. In terms of assembly, monomer. Mg(2+) is required as a cofactor.

The enzyme catalyses adenosine(37) in tRNA + dimethylallyl diphosphate = N(6)-dimethylallyladenosine(37) in tRNA + diphosphate. In terms of biological role, catalyzes the transfer of a dimethylallyl group onto the adenine at position 37 in tRNAs that read codons beginning with uridine, leading to the formation of N6-(dimethylallyl)adenosine (i(6)A). The chain is tRNA dimethylallyltransferase from Shewanella sp. (strain W3-18-1).